The sequence spans 230 residues: Cysteine S-methyltransferase OspZ (230 aa).

The tract at residues 49 to 52 is interaction with host proteins TAB2, TAB3 and ZRANB3; sequence GITR. S-adenosyl-L-methionine is bound by residues Ala-92, Ser-98, Arg-107, Gln-111, Tyr-204, and Glu-208.

It belongs to the NleE/OspZ family. Monomer.

It is found in the secreted. The protein resides in the host cytoplasm. The protein localises to the host nucleus. The enzyme catalyses L-cysteinyl-[protein] + S-adenosyl-L-methionine = S-methyl-L-cysteinyl-[protein] + S-adenosyl-L-homocysteine + H(+). Functionally, cysteine methyltransferase effector that inhibits host cell NF-kappa-B activation by preventing nuclear translocation of host protein RELA/p65. Acts by mediating cysteine methylation of host proteins TAB2 and TAB3: methylation of a conserved cysteine residue of the RanBP2-type zinc finger (NZF) of TAB2 and TAB3 disrupts zinc-binding, thereby inactivating the ubiquitin chain-binding activity of TAB2 and TAB3, leading to NF-kappa-B inactivation. Also mediates cysteine methylation of host protein ZRANB3, inactivating its ability to bind ubiquitin chains. The protein is Cysteine S-methyltransferase OspZ of Shigella boydii.